Consider the following 67-residue polypeptide: DNA-directed RNA polymerase subunit omega (67 aa).

It belongs to the RNA polymerase subunit omega family. In terms of assembly, the RNAP catalytic core consists of 2 alpha, 1 beta, 1 beta' and 1 omega subunit. When a sigma factor is associated with the core the holoenzyme is formed, which can initiate transcription.

The enzyme catalyses RNA(n) + a ribonucleoside 5'-triphosphate = RNA(n+1) + diphosphate. In terms of biological role, promotes RNA polymerase assembly. Latches the N- and C-terminal regions of the beta' subunit thereby facilitating its interaction with the beta and alpha subunits. This chain is DNA-directed RNA polymerase subunit omega, found in Albidiferax ferrireducens (strain ATCC BAA-621 / DSM 15236 / T118) (Rhodoferax ferrireducens).